The chain runs to 563 residues: Kdo(2)-lipid A phosphoethanolamine 7''-transferase (563 aa).

Residues 1–9 (MRYIKSITQ) lie on the Cytoplasmic side of the membrane. A helical membrane pass occupies residues 10-30 (QKLSFLLAIYIGLFMNGAVFY). Over 31 to 48 (RRFGSYAHDFTVWKGISA) the chain is Periplasmic. Residues 49–69 (VVELAATVLVTFFLLRLLSLF) traverse the membrane as a helical segment. The Cytoplasmic portion of the chain corresponds to 70-79 (GRRSWRILAS). Residues 80–100 (LVVLFSAGASYYMTFLNVVIG) traverse the membrane as a helical segment. Residues 101-117 (YGIIASVMTTDIDLSKE) lie on the Periplasmic side of the membrane. Residues 118–138 (VVGLNFILWLIAVSALPLILI) traverse the membrane as a helical segment. Residues 139–159 (WNNRCRYTLLRQLRTPGQRIR) lie on the Cytoplasmic side of the membrane. The helical transmembrane segment at 160-180 (SLAVVVLAGIMVWAPIRLLDI) threads the bilayer. The Periplasmic segment spans residues 181–563 (QQKKVERATG…IPQAKEAAAN (383 aa)).

The protein belongs to the phosphoethanolamine transferase family. EptB subfamily. Requires Ca(2+) as cofactor.

The protein resides in the cell inner membrane. The catalysed reaction is alpha-Kdo-(2-&gt;4)-alpha-Kdo-(2-&gt;6)-lipid A (E. coli) + a 1,2-diacyl-sn-glycero-3-phosphoethanolamine = 7-O-[2-aminoethoxy(hydroxy)phosphoryl]-alpha-Kdo-(2-&gt;4)-alpha-Kdo-(2-&gt;6)-lipid A + a 1,2-diacyl-sn-glycerol. It catalyses the reaction alpha-Kdo-(2-&gt;4)-alpha-Kdo-(2-&gt;6)-lipid IVA (E. coli) + a 1,2-diacyl-sn-glycero-3-phosphoethanolamine = 7-O-[2-aminoethoxy(hydroxy)phosphoryl]-alpha-Kdo-(2-&gt;4)-alpha-Kdo-(2-&gt;6)-lipid IVA (E. coli) + a 1,2-diacyl-sn-glycerol. Its activity is regulated as follows. Inhibited by calcium concentrations higher than 1 mM. Functionally, catalyzes the addition of a phosphoethanolamine (pEtN) moiety to the outer 3-deoxy-D-manno-octulosonic acid (Kdo) residue of a Kdo(2)-lipid A. Phosphatidylethanolamines with one unsaturated acyl group function as pEtN donors and the reaction releases diacylglycerol. This is Kdo(2)-lipid A phosphoethanolamine 7''-transferase (eptB) from Escherichia coli (strain K12).